Consider the following 154-residue polypeptide: Superoxide dismutase [Cu-Zn] (154 aa).

Lys19 participates in a covalent cross-link: Glycyl lysine isopeptide (Lys-Gly) (interchain with G-Cter in SUMO). A phosphoserine mark is found at Ser26 and Ser39. Residue Glu43 coordinates Zn(2+). Residues His47, His49, and His64 each coordinate Cu cation. Cys58 and Cys147 are oxidised to a cystine. A Zn(2+)-binding site is contributed by His64. Residue Lys70 forms a Glycyl lysine isopeptide (Lys-Gly) (interchain with G-Cter in SUMO) linkage. 3 residues coordinate Zn(2+): His72, His81, and Asp84. 2 positions are modified to phosphoserine: Ser99 and Ser117. His121 is a binding site for Cu cation. Phosphothreonine occurs at positions 132 and 138. Arg144 is a substrate binding site.

The protein belongs to the Cu-Zn superoxide dismutase family. As to quaternary structure, homodimer in holo form. In apo form, heterodimer with CCS1. Zinc-binding at 'His-16' of CCS1 and Glu-43 of apo-SOD1 is required for this heterodimerization. Requires Cu cation as cofactor. The cofactor is Zn(2+).

It localises to the cytoplasm. Its subcellular location is the mitochondrion intermembrane space. The catalysed reaction is 2 superoxide + 2 H(+) = H2O2 + O2. Its function is as follows. Destroys radicals which are normally produced within the cells and which are toxic to biological systems. This chain is Superoxide dismutase [Cu-Zn], found in Saccharomyces cerevisiae (strain ATCC 204508 / S288c) (Baker's yeast).